The chain runs to 67 residues: MARITVEDCLTKIPNRFQLVLAATYRARMLSQGHAPKVESKNKPGVTALREIAEGHVGLEMLRKVPV.

The protein belongs to the RNA polymerase subunit omega family. In terms of assembly, the RNAP catalytic core consists of 2 alpha, 1 beta, 1 beta' and 1 omega subunit. When a sigma factor is associated with the core the holoenzyme is formed, which can initiate transcription.

The catalysed reaction is RNA(n) + a ribonucleoside 5'-triphosphate = RNA(n+1) + diphosphate. Its function is as follows. Promotes RNA polymerase assembly. Latches the N- and C-terminal regions of the beta' subunit thereby facilitating its interaction with the beta and alpha subunits. The protein is DNA-directed RNA polymerase subunit omega of Methylibium petroleiphilum (strain ATCC BAA-1232 / LMG 22953 / PM1).